The following is a 343-amino-acid chain: L-threonine 3-dehydrogenase (343 aa).

Zn(2+) is bound at residue Cys38. Catalysis depends on charge relay system residues Thr40 and His43. The Zn(2+) site is built by His63, Glu64, Cys93, Cys96, Cys99, and Cys107. Residues Ile175, Asp195, Arg200, 262–264, and 286–287 each bind NAD(+); these read LGI and IY.

It belongs to the zinc-containing alcohol dehydrogenase family. In terms of assembly, homotetramer. The cofactor is Zn(2+).

The protein localises to the cytoplasm. The enzyme catalyses L-threonine + NAD(+) = (2S)-2-amino-3-oxobutanoate + NADH + H(+). Its pathway is amino-acid degradation; L-threonine degradation via oxydo-reductase pathway; glycine from L-threonine: step 1/2. Its function is as follows. Catalyzes the NAD(+)-dependent oxidation of L-threonine to 2-amino-3-ketobutyrate. This chain is L-threonine 3-dehydrogenase, found in Burkholderia mallei (strain NCTC 10247).